Consider the following 178-residue polypeptide: Fatty-acid and retinol-binding protein 1 (178 aa).

Positions 1–16 (MYHQLILMALIGVIMA) are cleaved as a signal peptide. N-linked (GlcNAc...) asparagine glycosylation is found at Asn44 and Asn75. Coiled coils occupy residues 67 to 89 (DAAL…ELRN) and 123 to 153 (KLDV…ELKA). N-linked (GlcNAc...) asparagine glycosylation is present at Asn157.

It belongs to the fatty-acid and retinol-binding protein (FARBP) family. N-glycosylated.

The protein localises to the secreted. Functionally, binds retinol and different fatty acids. This is Fatty-acid and retinol-binding protein 1 from Acanthocheilonema viteae (Filarial nematode worm).